The primary structure comprises 404 residues: Deoxyguanosinetriphosphate triphosphohydrolase-like protein (404 aa).

In terms of domain architecture, HD spans 69 to 217; the sequence is RLTHSLEVAQ…AGIADDIAYD (149 aa).

It belongs to the dGTPase family. Type 2 subfamily.

This Rhodopseudomonas palustris (strain BisB18) protein is Deoxyguanosinetriphosphate triphosphohydrolase-like protein.